The chain runs to 102 residues: Urease subunit beta (102 aa).

This sequence belongs to the urease beta subunit family. As to quaternary structure, heterotrimer of UreA (gamma), UreB (beta) and UreC (alpha) subunits. Three heterotrimers associate to form the active enzyme.

It localises to the cytoplasm. It carries out the reaction urea + 2 H2O + H(+) = hydrogencarbonate + 2 NH4(+). Its pathway is nitrogen metabolism; urea degradation; CO(2) and NH(3) from urea (urease route): step 1/1. The sequence is that of Urease subunit beta from Bordetella parapertussis (strain 12822 / ATCC BAA-587 / NCTC 13253).